Here is a 276-residue protein sequence, read N- to C-terminus: Transmembrane protein 45B (276 aa).

6 consecutive transmembrane segments (helical) span residues 7–27, 48–68, 95–115, 147–167, 181–201, and 213–233; these read HALP…KYPL, IIEA…EQFV, LFFA…HVPL, IHSL…VEVV, LLLL…PPFG, and IMFV…ILAA. Phosphoserine is present on residues S271 and S273.

The protein belongs to the TMEM45 family.

The protein resides in the endosome membrane. The protein localises to the lysosome membrane. It is found in the golgi apparatus. It localises to the trans-Golgi network membrane. Plays a role in innate immunity. This chain is Transmembrane protein 45B (TMEM45B), found in Bos taurus (Bovine).